The chain runs to 156 residues: MPRRREVPKREILPDPKYHNAEVAKFVNVLMTRGKKSVAERIIYGAMDQIHKKTGKDPVEVFTQALSNVRPMVEVKSRRVGGANYQVPVEVRSIRRNALAMRWLRDAARKRAEKSMGARLAGELAEAAEGRGGAVKKREEVHRMAEANKAFAHYRF.

The protein belongs to the universal ribosomal protein uS7 family. In terms of assembly, part of the 30S ribosomal subunit. Contacts proteins S9 and S11.

In terms of biological role, one of the primary rRNA binding proteins, it binds directly to 16S rRNA where it nucleates assembly of the head domain of the 30S subunit. Is located at the subunit interface close to the decoding center, probably blocks exit of the E-site tRNA. The chain is Small ribosomal subunit protein uS7 from Nitrosospira multiformis (strain ATCC 25196 / NCIMB 11849 / C 71).